The sequence spans 210 residues: Cytochrome c oxidase subunit 2 (210 aa).

At 1 to 20 (MAFILSFWMIFLLDSVIVLL) the chain is on the mitochondrial intermembrane side. The helical transmembrane segment at 21-42 (SFVCFVCVWICALLFSTVLLVS) threads the bilayer. The Mitochondrial matrix portion of the chain corresponds to 43–60 (KLNNIYCTWDFTASKFID). A helical transmembrane segment spans residues 61-86 (VYWFTIGGMFSLGLLLRLCLLLYFGH). Over 87–210 (LNFVSFDLCK…GFMPIVICFI (124 aa)) the chain is Mitochondrial intermembrane. Positions 157, 192, 194, 196, 200, and 203 each coordinate Cu cation. Residue glutamate 194 participates in Mg(2+) binding.

It belongs to the cytochrome c oxidase subunit 2 family. As to quaternary structure, component of the cytochrome c oxidase (complex IV, CIV), a multisubunit enzyme composed of a catalytic core of 3 subunits and several supernumerary subunits. The complex exists as a monomer or a dimer and forms supercomplexes (SCs) in the inner mitochondrial membrane with ubiquinol-cytochrome c oxidoreductase (cytochrome b-c1 complex, complex III, CIII). Requires Cu cation as cofactor.

The protein resides in the mitochondrion inner membrane. It catalyses the reaction 4 Fe(II)-[cytochrome c] + O2 + 8 H(+)(in) = 4 Fe(III)-[cytochrome c] + 2 H2O + 4 H(+)(out). Its function is as follows. Component of the cytochrome c oxidase, the last enzyme in the mitochondrial electron transport chain which drives oxidative phosphorylation. The respiratory chain contains 3 multisubunit complexes succinate dehydrogenase (complex II, CII), ubiquinol-cytochrome c oxidoreductase (cytochrome b-c1 complex, complex III, CIII) and cytochrome c oxidase (complex IV, CIV), that cooperate to transfer electrons derived from NADH and succinate to molecular oxygen, creating an electrochemical gradient over the inner membrane that drives transmembrane transport and the ATP synthase. Cytochrome c oxidase is the component of the respiratory chain that catalyzes the reduction of oxygen to water. Electrons originating from reduced cytochrome c in the intermembrane space (IMS) are transferred via the dinuclear copper A center (CU(A)) of subunit 2 and heme A of subunit 1 to the active site in subunit 1, a binuclear center (BNC) formed by heme A3 and copper B (CU(B)). The BNC reduces molecular oxygen to 2 water molecules using 4 electrons from cytochrome c in the IMS and 4 protons from the mitochondrial matrix. The chain is Cytochrome c oxidase subunit 2 from Leishmania tarentolae (Sauroleishmania tarentolae).